Reading from the N-terminus, the 460-residue chain is Ammonium transporter Rh type C (460 aa).

Topologically, residues 1-9 are cytoplasmic; that stretch reads MIWNTNLRW. A helical transmembrane segment spans residues 10 to 30; sequence RLPVACLLLEVALIALFGVFV. Residues 31 to 61 are Extracellular-facing; that stretch reads RYDMDADPHWVQEKVIKNLSTDLENEFYYRY. The N-linked (GlcNAc...) asparagine glycan is linked to N48. Residues 62 to 82 form a helical membrane-spanning segment; it reads PSFQDVHVMIFVGFGFLMTFL. Over 83–89 the chain is Cytoplasmic; that stretch reads QRYGYSS. A helical membrane pass occupies residues 90-110; it reads VGFNFLLAAFGIQWALLMQGW. Residues 111–125 are Extracellular-facing; the sequence is LQSFDGRYILVDLEN. The chain crosses the membrane as a helical span at residues 126–145; sequence LINADFCVGSVCVAFGAVLG. The Cytoplasmic segment spans residues 146-151; it reads KVSPVQ. The chain crosses the membrane as a helical span at residues 152–174; that stretch reads LLIMTLFQVTLFSINEYILLNLL. At 175 to 179 the chain is on the extracellular side; sequence EVKDS. The chain crosses the membrane as a helical span at residues 180 to 200; that stretch reads GGSMTIHAFGAYFGLTVAWIL. Topologically, residues 201–219 are cytoplasmic; sequence YRPNLHLSKERQSSTYHSD. The chain crosses the membrane as a helical span at residues 220–240; the sequence is LFAMIGTLFLWMYWPSFNSAI. The Extracellular segment spans residues 241–251; it reads SNHGDAQHRAA. A helical transmembrane segment spans residues 252 to 272; that stretch reads INTYCSLAACVLTSVALSSAL. Topologically, residues 273 to 285 are cytoplasmic; that stretch reads HRKGKLDMVHIQN. Residues 286-303 traverse the membrane as a helical segment; the sequence is ATLAGGVGLGTVAELMVL. Over 304 to 306 the chain is Extracellular; that stretch reads PFG. A helical membrane pass occupies residues 307–329; it reads SLIIGFVCGIVSTLGFVYLTPFL. Over 330–346 the chain is Cytoplasmic; that stretch reads ESRLHIQDTCGVHNLHG. Residues 347–367 traverse the membrane as a helical segment; it reads IPGIIGGIAGAVTASIANIDL. At 368 to 396 the chain is on the extracellular side; the sequence is YGEEGLAYAFGIERSKLNWSPNMQGRFQA. The chain crosses the membrane as a helical span at residues 397–417; that stretch reads AGLFVSLAMALVGGVIVGVIL. The Cytoplasmic portion of the chain corresponds to 418–460; it reads RLPFWGQAPDENCFEDAVYWEIPKEPKSTALRSEDSSIKPPEP.

This sequence belongs to the ammonium transporter (TC 2.A.49) family. Rh subfamily. As to quaternary structure, homotrimer. In terms of processing, N-glycosylated.

The protein resides in the apical cell membrane. It carries out the reaction NH4(+)(in) = NH4(+)(out). It catalyses the reaction methylamine(out) = methylamine(in). The enzyme catalyses CO2(out) = CO2(in). Functionally, ammonium transporter involved in the maintenance of acid-base homeostasis. Transports ammonium and its related derivative methylammonium across the plasma membrane of epithelial cells likely contributing to renal transepithelial ammonia transport and ammonia metabolism. Postulated to primarily mediate an electroneutral bidirectional transport of NH3 ammonia species according to a mechanism that implies interaction of an NH4(+) ion with acidic residues of the pore entry followed by dissociation of NH4(+) into NH3 and H(+). As a result NH3 transits through the central pore and is protonated on the extracellular side reforming NH4(+). May act as a CO2 channel providing for renal acid secretion. The protein is Ammonium transporter Rh type C (RHCG) of Bos taurus (Bovine).